A 79-amino-acid chain; its full sequence is Small ribosomal subunit protein bS18 (79 aa).

The protein belongs to the bacterial ribosomal protein bS18 family. As to quaternary structure, part of the 30S ribosomal subunit. Forms a tight heterodimer with protein bS6.

Functionally, binds as a heterodimer with protein bS6 to the central domain of the 16S rRNA, where it helps stabilize the platform of the 30S subunit. The sequence is that of Small ribosomal subunit protein bS18 from Enterococcus faecalis (strain ATCC 700802 / V583).